Reading from the N-terminus, the 969-residue chain is RNA polymerase-associated protein RapA (969 aa).

A Helicase ATP-binding domain is found at 164–334 (EVGRRHAPRV…FARLRLLDPD (171 aa)). 177-184 (DEVGLGKT) lines the ATP pocket. The DEAH box signature appears at 280-283 (DEAH). Residues 492-646 (RVNWLLEKVK…TCPTGRAVYD (155 aa)) form the Helicase C-terminal domain.

The protein belongs to the SNF2/RAD54 helicase family. RapA subfamily. Interacts with the RNAP. Has a higher affinity for the core RNAP than for the holoenzyme. Its ATPase activity is stimulated by binding to RNAP.

Its function is as follows. Transcription regulator that activates transcription by stimulating RNA polymerase (RNAP) recycling in case of stress conditions such as supercoiled DNA or high salt concentrations. Probably acts by releasing the RNAP, when it is trapped or immobilized on tightly supercoiled DNA. Does not activate transcription on linear DNA. Probably not involved in DNA repair. In Vibrio campbellii (strain ATCC BAA-1116), this protein is RNA polymerase-associated protein RapA.